A 271-amino-acid polypeptide reads, in one-letter code: Phosphatidylglycerol--prolipoprotein diacylglyceryl transferase (271 aa).

Helical transmembrane passes span 25-45 (WYGIMYVIALLLALLLAKFFV), 60-80 (YFIWVEIGVILGARLGYILIY), 103-123 (FVGIRGMSYHGAIIGFLIATL), 134-154 (WIFLDLVALSVPLAYVFGRIG), 181-201 (PSQLYEAFLEGIVVFIIVYLA), 209-229 (GELILVYAGAYSLARFICEFY), and 235-255 (GIGFVLWGMSMGQILSFIMFI). R152 is a binding site for a 1,2-diacyl-sn-glycero-3-phospho-(1'-sn-glycerol).

The protein belongs to the Lgt family.

Its subcellular location is the cell inner membrane. The enzyme catalyses L-cysteinyl-[prolipoprotein] + a 1,2-diacyl-sn-glycero-3-phospho-(1'-sn-glycerol) = an S-1,2-diacyl-sn-glyceryl-L-cysteinyl-[prolipoprotein] + sn-glycerol 1-phosphate + H(+). It participates in protein modification; lipoprotein biosynthesis (diacylglyceryl transfer). Its function is as follows. Catalyzes the transfer of the diacylglyceryl group from phosphatidylglycerol to the sulfhydryl group of the N-terminal cysteine of a prolipoprotein, the first step in the formation of mature lipoproteins. The chain is Phosphatidylglycerol--prolipoprotein diacylglyceryl transferase from Campylobacter jejuni subsp. jejuni serotype O:23/36 (strain 81-176).